The primary structure comprises 193 residues: Segregation and condensation protein B (193 aa).

Belongs to the ScpB family. In terms of assembly, homodimer. Homodimerization may be required to stabilize the binding of ScpA to the Smc head domains. Component of a cohesin-like complex composed of ScpA, ScpB and the Smc homodimer, in which ScpA and ScpB bind to the head domain of Smc. The presence of the three proteins is required for the association of the complex with DNA.

It localises to the cytoplasm. In terms of biological role, participates in chromosomal partition during cell division. May act via the formation of a condensin-like complex containing Smc and ScpA that pull DNA away from mid-cell into both cell halves. This chain is Segregation and condensation protein B, found in Streptococcus thermophilus (strain ATCC BAA-250 / LMG 18311).